The sequence spans 111 residues: uncharacterized protein (111 aa).

The tract at residues 1 to 85 is disordered; the sequence is MTGLMKAFQK…TSSREDEQKL (85 aa). Residues 11–23 show a composition bias toward polar residues; the sequence is LSPTKRQYAEITQ. The segment covering 24–42 has biased composition (low complexity); it reads SNSSISSSSSGSKYNDSSS. Over residues 56 to 77 the composition is skewed to polar residues; sequence ARASTSTQAQKPASSQQKGGTS.

This is an uncharacterized protein from Microplitis demolitor (Parasitoid wasp).